Here is a 223-residue protein sequence, read N- to C-terminus: PKHD-type hydroxylase CPS_3426 (223 aa).

Residues 77–175 form the Fe2OG dioxygenase domain; the sequence is KSMMPFIISE…RKVALTWIES (99 aa). Fe cation is bound by residues His96, Asp98, and His156. Position 166 (Arg166) interacts with 2-oxoglutarate.

It depends on Fe(2+) as a cofactor. The cofactor is L-ascorbate.

The chain is PKHD-type hydroxylase CPS_3426 from Colwellia psychrerythraea (strain 34H / ATCC BAA-681) (Vibrio psychroerythus).